The chain runs to 315 residues: PIH1 domain-containing protein 2 (315 aa).

The protein belongs to the PIH1 family.

The polypeptide is PIH1 domain-containing protein 2 (Pih1d2) (Mus musculus (Mouse)).